The following is a 168-amino-acid chain: MKRIISSSKSLKQLSNIGYGSKKQIHCKSVVDSDSDSDSDSDSDSDSDSNSNSNSNSNSNSNSNSNSNSNSNSNNNNNNTNNNNNNNNNNNNNNNNNNNNNNNNNNNNNSVFSELILKLIAERVILINNYNIEKIEEIKGIPELMKSITSTTAETKNNYYSGSYYSSR.

Residues 1–15 (MKRIISSSKSLKQLS) show a composition bias toward low complexity. The tract at residues 1–107 (MKRIISSSKS…NNNNNNNNNN (107 aa)) is disordered. The span at 33–47 (SDSDSDSDSDSDSDS) shows a compositional bias: acidic residues. Residues 48–107 (DSNSNSNSNSNSNSNSNSNSNSNSNSNNNNNNTNNNNNNNNNNNNNNNNNNNNNNNNNNN) show a composition bias toward low complexity.

This is an uncharacterized protein from Dictyostelium discoideum (Social amoeba).